A 432-amino-acid chain; its full sequence is Methylenetetrahydrofolate--tRNA-(uracil-5-)-methyltransferase TrmFO (432 aa).

Residue 7–12 (GGGLAG) participates in FAD binding.

Belongs to the MnmG family. TrmFO subfamily. It depends on FAD as a cofactor.

The protein resides in the cytoplasm. The enzyme catalyses uridine(54) in tRNA + (6R)-5,10-methylene-5,6,7,8-tetrahydrofolate + NADH + H(+) = 5-methyluridine(54) in tRNA + (6S)-5,6,7,8-tetrahydrofolate + NAD(+). It carries out the reaction uridine(54) in tRNA + (6R)-5,10-methylene-5,6,7,8-tetrahydrofolate + NADPH + H(+) = 5-methyluridine(54) in tRNA + (6S)-5,6,7,8-tetrahydrofolate + NADP(+). In terms of biological role, catalyzes the folate-dependent formation of 5-methyl-uridine at position 54 (M-5-U54) in all tRNAs. In Coprothermobacter proteolyticus (strain ATCC 35245 / DSM 5265 / OCM 4 / BT), this protein is Methylenetetrahydrofolate--tRNA-(uracil-5-)-methyltransferase TrmFO.